Reading from the N-terminus, the 104-residue chain is L-rhamnose mutarotase (104 aa).

Residue Tyr-18 participates in substrate binding. His-22 functions as the Proton donor in the catalytic mechanism. Residues Tyr-41 and 76-77 (WW) contribute to the substrate site.

This sequence belongs to the rhamnose mutarotase family. Homodimer.

The protein localises to the cytoplasm. It carries out the reaction alpha-L-rhamnose = beta-L-rhamnose. It functions in the pathway carbohydrate metabolism; L-rhamnose metabolism. Its function is as follows. Involved in the anomeric conversion of L-rhamnose. The sequence is that of L-rhamnose mutarotase from Oceanobacillus iheyensis (strain DSM 14371 / CIP 107618 / JCM 11309 / KCTC 3954 / HTE831).